The primary structure comprises 728 residues: Phomopsene synthase (728 aa).

A terpene cyclase region spans residues 1–327 (MEYRYSYVID…PRYHSDQSLD (327 aa)). The Mg(2+) site is built by Asp-94 and Asp-98. Residues Asp-94, Asp-98, 181 to 184 (RIVD), Asn-226, 230 to 234 (SWEKE), and 319 to 320 (RY) each bind substrate. The DDXXD 1 signature appears at 94-98 (DDLVD). Residues 226–234 (NDVQSWEKE) carry the NSE/DTE motif. The tract at residues 328–728 (EMMVARMKYG…FRFLLSLLKV (401 aa)) is prenyltransferase. The segment covering 352–363 (ENRGTKRTHQDD) has biased composition (basic and acidic residues). The tract at residues 352 to 379 (ENRGTKRTHQDDTEGVQSVKRFNGASTK) is disordered. 3 tandem repeats follow at residues 381–386 (GINGTN), 387–392 (GINGLN), and 393–398 (GINGSN). Positions 381 to 398 (GINGTNGINGLNGINGSN) are 3 X 6 AA approximate tandem repeats. 3 residues coordinate isopentenyl diphosphate: Lys-447, Arg-450, and His-479. 2 residues coordinate Mg(2+): Asp-486 and Asp-490. A DDXXD 2 motif is present at residues 486–490 (DDVQD). Residue Arg-495 participates in dimethylallyl diphosphate binding. Residue Arg-496 participates in isopentenyl diphosphate binding. 6 residues coordinate dimethylallyl diphosphate: Lys-574, Thr-575, Gln-610, Asn-617, Lys-627, and Lys-637.

It in the N-terminal section; belongs to the terpene synthase family. In the C-terminal section; belongs to the FPP/GGPP synthase family. As to quaternary structure, hexamer. Requires Mg(2+) as cofactor.

The enzyme catalyses isopentenyl diphosphate + (2E,6E)-farnesyl diphosphate = (2E,6E,10E)-geranylgeranyl diphosphate + diphosphate. The protein operates within secondary metabolite biosynthesis; terpenoid biosynthesis. Functionally, bifunctional terpene synthase; part of the gene cluster that mediates the biosynthesis of the diterpene methyl phomopsenonate. At first, the universal precursor of diterpene, geranylgeranyl diphosphate (GGPP) is provided and is cyclized by the unusual bifunctional terpene synthase PaPS to give phomopsene. The C-terminal prenyltransferase domain of PaPS catalyzes formation of GGPP, whereas the N-terminal terpene cyclase domain catalyzes the cyclization of GGPP to phomopsene. Since the oxidation of a methylgroup to a carboxyl group is frequently catalyzed by a cytochrome P450 monooxygenase, the C-16 methyl group would be oxidized by the cluster-specific cytochrome P450 monooxygenase ORF3. Subsequently, oxidation of the allylic position and methylation of the carboxyl group may give methyl phomopsenonate. Although further study is necessary to identify genes such as a monooxygenase and a methyltransferase, the predicted functions of genes on the cluster are correlated with the structure of methyl phomopsenonate. The polypeptide is Phomopsene synthase (Phomopsis amygdali (Fusicoccum amygdali)).